Reading from the N-terminus, the 690-residue chain is Eukaryotic translation initiation factor 3 subunit B (690 aa).

The segment at M1–D37 is disordered. The segment covering N15–F25 has biased composition (acidic residues). An RRM domain is found at S57 to D141. 5 WD repeats span residues T207–K246, D293–L331, I334–E369, E442–L484, and P530–T575. A coiled-coil region spans residues E595–R645.

It belongs to the eIF-3 subunit B family. As to quaternary structure, component of the eukaryotic translation initiation factor 3 (eIF-3) complex. The eIF-3 complex interacts with pix. Interacts with mxt.

The protein resides in the cytoplasm. Functionally, RNA-binding component of the eukaryotic translation initiation factor 3 (eIF-3) complex, which is involved in protein synthesis of a specialized repertoire of mRNAs and, together with other initiation factors, stimulates binding of mRNA and methionyl-tRNAi to the 40S ribosome. The eIF-3 complex specifically targets and initiates translation of a subset of mRNAs involved in cell proliferation. This is Eukaryotic translation initiation factor 3 subunit B from Drosophila sechellia (Fruit fly).